The primary structure comprises 1454 residues: Alpha-2-macroglobulin-like protein 1 (1454 aa).

Positions 1–17 are cleaved as a signal peptide; sequence MWAQLLLGMLALSPAIA. The cysteines at positions 40 and 78 are disulfide-linked. Asparagine 120 is a glycosylation site (N-linked (GlcNAc...) asparagine). Disulfide bonds link cysteine 241/cysteine 291 and cysteine 259/cysteine 279. Residues asparagine 281 and asparagine 409 are each glycosylated (N-linked (GlcNAc...) asparagine). 7 disulfides stabilise this stretch: cysteine 464/cysteine 557, cysteine 589/cysteine 769, cysteine 819/cysteine 847, cysteine 845/cysteine 881, cysteine 919/cysteine 1307, cysteine 1075/cysteine 1123, and cysteine 1338/cysteine 1453. The tract at residues 695 to 726 is bait region; it reads SHRSPEYSTAMGAGGGHPEAFESSTPLHQAED. N-linked (GlcNAc...) asparagine glycosylation is present at asparagine 857. The segment at residues 970 to 973 is a cross-link (isoglutamyl cysteine thioester (Cys-Gln)); the sequence is CGEQ. A glycan (N-linked (GlcNAc...) asparagine) is linked at asparagine 1020.

This sequence belongs to the protease inhibitor I39 (alpha-2-macroglobulin) family. As to quaternary structure, monomer. In the epidermis, expressed predominantly in the granular layer at the apical edge of keratinocytes (at protein level). Also detected in placenta, testis and thymus but not in epithelia of kidney, lung, small intestine or colon.

Its subcellular location is the secreted. Is able to inhibit all four classes of proteinases by a unique 'trapping' mechanism. This protein has a peptide stretch, called the 'bait region' which contains specific cleavage sites for different proteinases. When a proteinase cleaves the bait region, a conformational change is induced in the protein which traps the proteinase. The entrapped enzyme remains active against low molecular weight substrates (activity against high molecular weight substrates is greatly reduced). Following cleavage in the bait region a thioester bond is hydrolyzed and mediates the covalent binding of the protein to the proteinase. Displays inhibitory activity against chymotrypsin, papain, thermolysin, subtilisin A and, to a lesser extent, elastase but not trypsin. May play an important role during desquamation by inhibiting extracellular proteases. The protein is Alpha-2-macroglobulin-like protein 1 of Homo sapiens (Human).